The primary structure comprises 390 residues: GTPase Obg (390 aa).

An Obg domain is found at 1 to 159; sequence MKFIDEALIR…RDLQLELMLL (159 aa). One can recognise an OBG-type G domain in the interval 160–333; sequence ADVGMLGLPN…LCRDIMDFIE (174 aa). Residues 166 to 173, 191 to 195, 213 to 216, 283 to 286, and 314 to 316 contribute to the GTP site; these read GLPNAGKS, FTTLV, DIPG, NKID, and SAV. Positions 173 and 193 each coordinate Mg(2+). The disordered stretch occupies residues 363–390; it reads DHQFEDEDEDWDDWSEEDEEGVETIYKP. Acidic residues predominate over residues 366-384; sequence FEDEDEDWDDWSEEDEEGV.

This sequence belongs to the TRAFAC class OBG-HflX-like GTPase superfamily. OBG GTPase family. Monomer. It depends on Mg(2+) as a cofactor.

The protein localises to the cytoplasm. An essential GTPase which binds GTP, GDP and possibly (p)ppGpp with moderate affinity, with high nucleotide exchange rates and a fairly low GTP hydrolysis rate. Plays a role in control of the cell cycle, stress response, ribosome biogenesis and in those bacteria that undergo differentiation, in morphogenesis control. The polypeptide is GTPase Obg (Pasteurella multocida (strain Pm70)).